The primary structure comprises 111 residues: Putative pterin-4-alpha-carbinolamine dehydratase (111 aa).

Belongs to the pterin-4-alpha-carbinolamine dehydratase family.

It catalyses the reaction (4aS,6R)-4a-hydroxy-L-erythro-5,6,7,8-tetrahydrobiopterin = (6R)-L-erythro-6,7-dihydrobiopterin + H2O. The sequence is that of Putative pterin-4-alpha-carbinolamine dehydratase from Chlorobaculum tepidum (strain ATCC 49652 / DSM 12025 / NBRC 103806 / TLS) (Chlorobium tepidum).